The chain runs to 765 residues: Endothelin-converting enzyme 2 (765 aa).

At 1-60 (MSVALQELGGGGNMVEYKRATLRDEDAPETPVEGGASPDAVEAGFRKRTSRLLGLHTQLE) the chain is on the cytoplasmic side. A helical; Signal-anchor for type II membrane protein membrane pass occupies residues 61–81 (LVLAGVSLLLAALLLGCLVAL). The Lumenal portion of the chain corresponds to 82-765 (GVQYHRDPSH…MNSGQLCEVW (684 aa)). The 673-residue stretch at 93 to 765 (TCLTEACIRV…MNSGQLCEVW (673 aa)) folds into the Peptidase M13 domain. Cystine bridges form between Cys-94-Cys-99, Cys-117-Cys-750, Cys-125-Cys-710, Cys-181-Cys-430, and Cys-639-Cys-762. N-linked (GlcNAc...) asparagine glycosylation is found at Asn-161, Asn-165, Asn-206, Asn-266, Asn-311, Asn-378, and Asn-534. His-602 is a Zn(2+) binding site. The active site involves Glu-603. His-606 is a Zn(2+) binding site. N-linked (GlcNAc...) asparagine glycosylation is found at Asn-627 and Asn-635. Residue Glu-662 coordinates Zn(2+). Asp-666 (proton donor) is an active-site residue.

This sequence belongs to the peptidase M13 family. It depends on Zn(2+) as a cofactor. As to expression, isoform ECE2-1 and isoform ECE2-2 are expressed in brain and adrenal gland.

Its subcellular location is the golgi apparatus membrane. It is found in the cytoplasmic vesicle. The protein localises to the secretory vesicle membrane. It carries out the reaction Hydrolysis of the 21-Trp-|-Val-22 bond in big endothelin to form endothelin 1.. Functionally, converts big endothelin-1 to endothelin-1. Also involved in the processing of various neuroendocrine peptides, including neurotensin, angiotensin I, substance P, proenkephalin-derived peptides, and prodynorphin-derived peptides. May play a role in amyloid-beta processing. In Bos taurus (Bovine), this protein is Endothelin-converting enzyme 2.